The chain runs to 1234 residues: DNA-directed RNA polymerase subunit beta (1234 aa).

It belongs to the RNA polymerase beta chain family. In terms of assembly, the RNAP catalytic core consists of 2 alpha, 1 beta, 1 beta' and 1 omega subunit. When a sigma factor is associated with the core the holoenzyme is formed, which can initiate transcription.

The catalysed reaction is RNA(n) + a ribonucleoside 5'-triphosphate = RNA(n+1) + diphosphate. Its function is as follows. DNA-dependent RNA polymerase catalyzes the transcription of DNA into RNA using the four ribonucleoside triphosphates as substrates. The sequence is that of DNA-directed RNA polymerase subunit beta from Clostridium perfringens (strain ATCC 13124 / DSM 756 / JCM 1290 / NCIMB 6125 / NCTC 8237 / Type A).